A 127-amino-acid polypeptide reads, in one-letter code: Large ribosomal subunit protein bL20 (127 aa).

Belongs to the bacterial ribosomal protein bL20 family.

Binds directly to 23S ribosomal RNA and is necessary for the in vitro assembly process of the 50S ribosomal subunit. It is not involved in the protein synthesizing functions of that subunit. In Streptomyces avermitilis (strain ATCC 31267 / DSM 46492 / JCM 5070 / NBRC 14893 / NCIMB 12804 / NRRL 8165 / MA-4680), this protein is Large ribosomal subunit protein bL20.